The primary structure comprises 175 residues: Ribosome maturation factor RimM (175 aa).

The PRC barrel domain maps to 96 to 175 (EDEFYWRELF…RIEVDWDPGF (80 aa)).

It belongs to the RimM family. In terms of assembly, binds ribosomal protein uS19.

It is found in the cytoplasm. Its function is as follows. An accessory protein needed during the final step in the assembly of 30S ribosomal subunit, possibly for assembly of the head region. Essential for efficient processing of 16S rRNA. May be needed both before and after RbfA during the maturation of 16S rRNA. It has affinity for free ribosomal 30S subunits but not for 70S ribosomes. In Aliivibrio fischeri (strain ATCC 700601 / ES114) (Vibrio fischeri), this protein is Ribosome maturation factor RimM.